A 380-amino-acid polypeptide reads, in one-letter code: MRALIIGVGQCGTKIADLFALVDFDTIALNTSRGDLEYLKHIPHDRRILIGESITGGKGVNANPLLGREAMKRDLPLVMRKIGSIVGYEDVDIFFLTFGFGGGTGAGGTPVLAEALKEEYPDSLVVAIGALPLKEEGIRPTINAAITIDKLSKVADSIIAIDNNKLKESGDDISSAYEKINYTIVERIASLLALVDVPGEQTLDASDLKFVLKAFGSFATVGYAKADASKVKNLSRLIIKSFESEGLYLDANIESALYGLVAIHGPPEVLKASDIFEALDYLTSKIRGKQIFRGFYPDPRERDVEVVTLLSGIYESKSIENIVRTAKEYARSFMQAKSEAETKKKELLTGLPDFDDVYPSLEATGSDDPEGFAEYREVSR.

GTP-binding positions include 10–14 (QCGTK), 103–105 (GTG), Glu136, Asn163, and Asn181. Residues 359–380 (PSLEATGSDDPEGFAEYREVSR) are disordered.

The protein belongs to the CetZ family.

It localises to the cytoplasm. Involved in cell shape control. The protein is Tubulin-like protein CetZ of Thermococcus kodakarensis (strain ATCC BAA-918 / JCM 12380 / KOD1) (Pyrococcus kodakaraensis (strain KOD1)).